Here is a 212-residue protein sequence, read N- to C-terminus: Peptide methionine sulfoxide reductase MsrA (212 aa).

The active site involves cysteine 52.

Belongs to the MsrA Met sulfoxide reductase family.

It carries out the reaction L-methionyl-[protein] + [thioredoxin]-disulfide + H2O = L-methionyl-(S)-S-oxide-[protein] + [thioredoxin]-dithiol. It catalyses the reaction [thioredoxin]-disulfide + L-methionine + H2O = L-methionine (S)-S-oxide + [thioredoxin]-dithiol. Functionally, has an important function as a repair enzyme for proteins that have been inactivated by oxidation. Catalyzes the reversible oxidation-reduction of methionine sulfoxide in proteins to methionine. This Salmonella newport (strain SL254) protein is Peptide methionine sulfoxide reductase MsrA.